The sequence spans 353 residues: Photosystem II protein D1 (353 aa).

Position 2 is an N-acetylthreonine (Thr2). Thr2 bears the Phosphothreonine mark. 3 helical membrane passes run 29-46, 118-133, and 142-156; these read YIGW…TATS, HFLL…EWEL, and WIAV…AATA. His118 is a chlorophyll a binding site. Position 126 (Tyr126) interacts with pheophytin a. [CaMn4O5] cluster contacts are provided by Asp170 and Glu189. Residues 197–218 form a helical membrane-spanning segment; that stretch reads FHMLGVAGVFGGSLFSAMHGSL. A chlorophyll a-binding site is contributed by His198. A quinone-binding positions include His215 and 264-265; that span reads SF. Fe cation is bound at residue His215. His272 provides a ligand contact to Fe cation. The chain crosses the membrane as a helical span at residues 274–288; that stretch reads FLAAWPVVGIWFTAL. Residues His332, Glu333, Asp342, and Ala344 each coordinate [CaMn4O5] cluster. The propeptide occupies 345-353; the sequence is AIEAPATNG.

Belongs to the reaction center PufL/M/PsbA/D family. As to quaternary structure, PSII is composed of 1 copy each of membrane proteins PsbA, PsbB, PsbC, PsbD, PsbE, PsbF, PsbH, PsbI, PsbJ, PsbK, PsbL, PsbM, PsbT, PsbX, PsbY, PsbZ, Psb30/Ycf12, at least 3 peripheral proteins of the oxygen-evolving complex and a large number of cofactors. It forms dimeric complexes. It depends on The D1/D2 heterodimer binds P680, chlorophylls that are the primary electron donor of PSII, and subsequent electron acceptors. It shares a non-heme iron and each subunit binds pheophytin, quinone, additional chlorophylls, carotenoids and lipids. D1 provides most of the ligands for the Mn4-Ca-O5 cluster of the oxygen-evolving complex (OEC). There is also a Cl(-1) ion associated with D1 and D2, which is required for oxygen evolution. The PSII complex binds additional chlorophylls, carotenoids and specific lipids. as a cofactor. Post-translationally, tyr-161 forms a radical intermediate that is referred to as redox-active TyrZ, YZ or Y-Z. In terms of processing, C-terminally processed by CTPA; processing is essential to allow assembly of the oxygen-evolving complex and thus photosynthetic growth.

The protein resides in the plastid membrane. The enzyme catalyses 2 a plastoquinone + 4 hnu + 2 H2O = 2 a plastoquinol + O2. Functionally, photosystem II (PSII) is a light-driven water:plastoquinone oxidoreductase that uses light energy to abstract electrons from H(2)O, generating O(2) and a proton gradient subsequently used for ATP formation. It consists of a core antenna complex that captures photons, and an electron transfer chain that converts photonic excitation into a charge separation. The D1/D2 (PsbA/PsbD) reaction center heterodimer binds P680, the primary electron donor of PSII as well as several subsequent electron acceptors. This chain is Photosystem II protein D1, found in Cuscuta reflexa (Southern Asian dodder).